Consider the following 3011-residue polypeptide: Chromodomain-helicase-DNA-binding protein 7 (3011 aa).

5 disordered regions span residues I90–G146, P159–Q189, M202–G422, Q502–I806, and P941–S960. The segment covering P159 to Q168 has biased composition (low complexity). Residues P169–P179 are compositionally biased toward pro residues. The span at Q203 to Q215 shows a compositional bias: low complexity. 4 stretches are compositionally biased toward polar residues: residues F216–N227, V241–Q258, Q291–V347, and G374–Y393. Over residues Q502 to P516 the composition is skewed to low complexity. Composition is skewed to polar residues over residues T576–V586 and D630–C641. Basic and acidic residues-rich tracts occupy residues K655–E684 and K718–K730. Residues Q747 to R759 are compositionally biased toward basic residues. Basic and acidic residues predominate over residues Y760 to D770. Residues S783–S795 show a composition bias toward polar residues. Chromo domains follow at residues P801–K868 and V883–R948. In terms of domain architecture, Helicase ATP-binding spans L981–G1155. Residue D994 to T1001 participates in ATP binding. Residues D1106–H1109 carry the DEAH box motif. A Helicase C-terminal domain is found at L1295–L1465. 3 disordered regions span residues F1577–Y1602, G1836–I1869, and G2136–M2291. The span at E1585–D1597 shows a compositional bias: basic and acidic residues. A compositionally biased stretch (acidic residues) spans D1845–P1856. Basic and acidic residues predominate over residues E1857–D1867. Positions G2136–S2145 are enriched in polar residues. Basic and acidic residues-rich tracts occupy residues Q2166–C2207 and C2218–G2238. The span at S2239–S2253 shows a compositional bias: acidic residues. Residues R2403 to Q2433 adopt a coiled-coil conformation. The residue at position 2561 (S2561) is a Phosphoserine. 2 disordered regions span residues T2825–N2900 and G2946–E3011. The span at G2841–E2851 shows a compositional bias: basic and acidic residues. Residues D2864–S2877 show a composition bias toward polar residues. Positions A2878 to T2893 are enriched in low complexity. The segment covering N2948–E2964 has biased composition (basic and acidic residues). Acidic residues-rich tracts occupy residues E2965–E2974 and I2984–E3011.

This sequence belongs to the SNF2/RAD54 helicase family. In terms of tissue distribution, expressed in the neural epithelium, otic placodes, optic placodes, branchial arches, and the olfactory placodes,.

It is found in the nucleus. It carries out the reaction ATP + H2O = ADP + phosphate + H(+). Functionally, ATP-dependent chromatin-remodeling factor, slides nucleosomes along DNA; nucleosome sliding requires ATP.Probable transcription regulator. Maybe involved in the in 45S precursor rRNA production. The protein is Chromodomain-helicase-DNA-binding protein 7 (CHD7) of Gallus gallus (Chicken).